The primary structure comprises 206 residues: ATP-dependent Clp protease proteolytic subunit 2 (206 aa).

S100 serves as the catalytic Nucleophile. H125 is an active-site residue.

Belongs to the peptidase S14 family. Fourteen ClpP subunits assemble into 2 heptameric rings which stack back to back to give a disk-like structure with a central cavity, resembling the structure of eukaryotic proteasomes.

It localises to the cytoplasm. The enzyme catalyses Hydrolysis of proteins to small peptides in the presence of ATP and magnesium. alpha-casein is the usual test substrate. In the absence of ATP, only oligopeptides shorter than five residues are hydrolyzed (such as succinyl-Leu-Tyr-|-NHMec, and Leu-Tyr-Leu-|-Tyr-Trp, in which cleavage of the -Tyr-|-Leu- and -Tyr-|-Trp bonds also occurs).. Cleaves peptides in various proteins in a process that requires ATP hydrolysis. Has a chymotrypsin-like activity. Plays a major role in the degradation of misfolded proteins. The sequence is that of ATP-dependent Clp protease proteolytic subunit 2 from Myxococcus xanthus.